The chain runs to 380 residues: UDP-3-O-acylglucosamine N-acyltransferase (380 aa).

The active-site Proton acceptor is the H263.

Belongs to the transferase hexapeptide repeat family. LpxD subfamily. As to quaternary structure, homotrimer.

It catalyses the reaction a UDP-3-O-[(3R)-3-hydroxyacyl]-alpha-D-glucosamine + a (3R)-hydroxyacyl-[ACP] = a UDP-2-N,3-O-bis[(3R)-3-hydroxyacyl]-alpha-D-glucosamine + holo-[ACP] + H(+). It participates in bacterial outer membrane biogenesis; LPS lipid A biosynthesis. In terms of biological role, catalyzes the N-acylation of UDP-3-O-acylglucosamine using 3-hydroxyacyl-ACP as the acyl donor. Is involved in the biosynthesis of lipid A, a phosphorylated glycolipid that anchors the lipopolysaccharide to the outer membrane of the cell. This Rhodopirellula baltica (strain DSM 10527 / NCIMB 13988 / SH1) protein is UDP-3-O-acylglucosamine N-acyltransferase.